Reading from the N-terminus, the 401-residue chain is Jumonji C domain-containing protein 5 (401 aa).

A JmjC domain is found at 255 to 401 (EYLAQHELFA…PSFSVSFWWE (147 aa)). Fe cation-binding residues include His-306, Asp-308, and His-385.

Fe(2+) serves as cofactor. Expressed in neurons close to the dorsal lateral neurons involved in circadian rhythm.

It localises to the nucleus. The protein localises to the nucleoplasm. The protein resides in the cytoplasm. The enzyme catalyses L-arginyl-[protein] + 2-oxoglutarate + O2 = (3R)-3-hydroxy-L-arginyl-[protein] + succinate + CO2. Bifunctional enzyme that acts both as an endopeptidase and 2-oxoglutarate-dependent monooxygenase. May be involved in regulation of behavior and circadian rhythms. This is Jumonji C domain-containing protein 5 from Drosophila melanogaster (Fruit fly).